Here is a 380-residue protein sequence, read N- to C-terminus: Cytochrome b (380 aa).

The next 4 helical transmembrane spans lie at 33–53 (FGSLLGLCLIVQILTGLFLAM), 77–98 (WLIRYMHANGASMFFICLFLHV), 113–133 (WNMGIVLLFAVMATAFMGYVL), and 178–198 (FFAFHFILPFIITALVLVHLL). 2 residues coordinate heme: His-83 and His-97. The heme site is built by His-182 and His-196. His-201 provides a ligand contact to a ubiquinone. A run of 4 helical transmembrane segments spans residues 226–246 (VKDFLGVLILLMAFMILTLFF), 288–308 (LGGVLALILSIVILAFMPLLH), 320–340 (ITQTMYWILVADLLVLTWIGG), and 347–367 (FIIIGQTASIAYFTIIVIFMP).

Belongs to the cytochrome b family. As to quaternary structure, the cytochrome bc1 complex contains 11 subunits: 3 respiratory subunits (MT-CYB, CYC1 and UQCRFS1), 2 core proteins (UQCRC1 and UQCRC2) and 6 low-molecular weight proteins (UQCRH/QCR6, UQCRB/QCR7, UQCRQ/QCR8, UQCR10/QCR9, UQCR11/QCR10 and a cleavage product of UQCRFS1). This cytochrome bc1 complex then forms a dimer. The cofactor is heme.

The protein resides in the mitochondrion inner membrane. Its function is as follows. Component of the ubiquinol-cytochrome c reductase complex (complex III or cytochrome b-c1 complex) that is part of the mitochondrial respiratory chain. The b-c1 complex mediates electron transfer from ubiquinol to cytochrome c. Contributes to the generation of a proton gradient across the mitochondrial membrane that is then used for ATP synthesis. This Microtus arvalis (Common vole) protein is Cytochrome b (MT-CYB).